A 66-amino-acid polypeptide reads, in one-letter code: Gallinacin-5 (66 aa).

An N-terminal signal peptide occupies residues 1 to 19 (MQILTLLFAVLLLMLRAEP). Residues 20–25 (GLSLAR) constitute a propeptide that is removed on maturation. 3 disulfide bridges follow: C31/C59, C38/C53, and C43/C60.

It belongs to the beta-defensin family. In terms of tissue distribution, strong expression in the tongue and bone marrow. Low expression in the esophagus, trachea, lung, brain and ovary. Expressed in the ovarian stroma, but not in the ovarian follicles.

It localises to the secreted. Its subcellular location is the cytoplasmic granule. In terms of biological role, has bactericidal activity. This chain is Gallinacin-5 (GAL5), found in Gallus gallus (Chicken).